Reading from the N-terminus, the 220-residue chain is Putative cobalt transport protein CbiM (220 aa).

The next 6 helical transmembrane spans lie at 6 to 26 (GFLP…VISY), 45 to 65 (IAVA…SVTG), 74 to 94 (GIAV…IVLL), 107 to 127 (TLGA…WVVF), 153 to 173 (LVTS…AGVV), and 188 to 208 (IPIG…IAMS).

The protein belongs to the CbiM family. As to quaternary structure, forms an energy-coupling factor (ECF) transporter complex composed of an ATP-binding protein (A component, CbiO), a transmembrane protein (T component, CbiQ) and 2 possible substrate-capture proteins (S components, CbiM and CbiN) of unknown stoichimetry.

It is found in the cell membrane. It functions in the pathway cofactor biosynthesis; adenosylcobalamin biosynthesis. Functionally, part of the energy-coupling factor (ECF) transporter complex CbiMNOQ involved in cobalt import. This is Putative cobalt transport protein CbiM from Halobacterium salinarum (strain ATCC 29341 / DSM 671 / R1).